A 216-amino-acid polypeptide reads, in one-letter code: Cytochrome c biogenesis ATP-binding export protein CcmA (216 aa).

The 214-residue stretch at 2–215 (LSVEELSCVR…SNHLRKIKLG (214 aa)) folds into the ABC transporter domain. 34-41 (GHNGAGKT) contributes to the ATP binding site.

Belongs to the ABC transporter superfamily. CcmA exporter (TC 3.A.1.107) family. As to quaternary structure, the complex is composed of two ATP-binding proteins (CcmA) and two transmembrane proteins (CcmB).

It localises to the cell inner membrane. It catalyses the reaction heme b(in) + ATP + H2O = heme b(out) + ADP + phosphate + H(+). Its function is as follows. Part of the ABC transporter complex CcmAB involved in the biogenesis of c-type cytochromes; once thought to export heme, this seems not to be the case, but its exact role is uncertain. Responsible for energy coupling to the transport system. The chain is Cytochrome c biogenesis ATP-binding export protein CcmA from Photobacterium profundum (strain SS9).